Reading from the N-terminus, the 216-residue chain is 3-isopropylmalate dehydratase small subunit (216 aa).

The protein belongs to the LeuD family. LeuD type 1 subfamily. Heterodimer of LeuC and LeuD.

It carries out the reaction (2R,3S)-3-isopropylmalate = (2S)-2-isopropylmalate. Its pathway is amino-acid biosynthesis; L-leucine biosynthesis; L-leucine from 3-methyl-2-oxobutanoate: step 2/4. Its function is as follows. Catalyzes the isomerization between 2-isopropylmalate and 3-isopropylmalate, via the formation of 2-isopropylmaleate. In Psychrobacter arcticus (strain DSM 17307 / VKM B-2377 / 273-4), this protein is 3-isopropylmalate dehydratase small subunit.